The primary structure comprises 454 residues: MSDNDTIVAQATPPGRGGVGILRISGFKAREVAETVLGKLPKPRYADYLPFKDADGSVLDQGIALWFPGPNSFTGEDVLELQGHGGPVILDLLLKRILTIPGLRIARPGEFSERAFLNDKLDLAQAEAIADLIDASSEQAARSALNSLQGAFSARVNHLVEALTHLRIYVEAAIDFPDEEIDFLSDGKIEAQLNDVIADLDAVRAEARQGSLLREGMKVVIAGRPNAGKSSLLNALAGREAAIVTDIAGTTRDVLREHIHIDGMPLHIIDTAGLREASDEVERIGIERAWQEIEQADRVLFMVDGTTTDAVDPAEIWPEFIARLPAKLPITVVRNKADITGETLGMSEVNGHALIRLSARTGEGVEVLRNHLKQSMGFDTNMEGGFLARRRHLQALEQAAEHLQQGKAQLLGAWAGELLAEELRLAQQNLSEITGEFTSDDLLGRIFSSFCIGK.

(6S)-5-formyl-5,6,7,8-tetrahydrofolate contacts are provided by Arg23, Glu80, and Lys120. In terms of domain architecture, TrmE-type G spans 216 to 377; the sequence is GMKVVIAGRP…LRNHLKQSMG (162 aa). Asn226 serves as a coordination point for K(+). Residues 226-231, 245-251, 270-273, 335-338, and 358-360 each bind GTP; these read NAGKSS, TDIAGTT, DTAG, NKAD, and SAR. A Mg(2+)-binding site is contributed by Ser230. Thr245, Ile247, and Thr250 together coordinate K(+). Thr251 serves as a coordination point for Mg(2+). Lys454 contributes to the (6S)-5-formyl-5,6,7,8-tetrahydrofolate binding site.

Belongs to the TRAFAC class TrmE-Era-EngA-EngB-Septin-like GTPase superfamily. TrmE GTPase family. Homodimer. Heterotetramer of two MnmE and two MnmG subunits. It depends on K(+) as a cofactor.

It is found in the cytoplasm. In terms of biological role, exhibits a very high intrinsic GTPase hydrolysis rate. Involved in the addition of a carboxymethylaminomethyl (cmnm) group at the wobble position (U34) of certain tRNAs, forming tRNA-cmnm(5)s(2)U34. In Escherichia coli (strain 55989 / EAEC), this protein is tRNA modification GTPase MnmE.